The following is a 305-amino-acid chain: Glycine--tRNA ligase alpha subunit (305 aa).

Belongs to the class-II aminoacyl-tRNA synthetase family. In terms of assembly, tetramer of two alpha and two beta subunits.

Its subcellular location is the cytoplasm. It catalyses the reaction tRNA(Gly) + glycine + ATP = glycyl-tRNA(Gly) + AMP + diphosphate. This Streptococcus thermophilus (strain CNRZ 1066) protein is Glycine--tRNA ligase alpha subunit.